The sequence spans 64 residues: Alpha-like toxin Lqh6 (64 aa).

The region spanning 2 to 63 (RDGYIAQPEN…GIIVDGVKCH (62 aa)) is the LCN-type CS-alpha/beta domain. Disulfide bonds link C12-C62, C16-C34, C20-C44, and C24-C46. At K64 the chain carries Lysine amide.

Belongs to the long (4 C-C) scorpion toxin superfamily. Sodium channel inhibitor family. Alpha subfamily. In terms of tissue distribution, expressed by the venom gland.

The protein localises to the secreted. Alpha toxins bind voltage-independently at site-3 of sodium channels (Nav) and inhibit the inactivation of the activated channels, thereby blocking neuronal transmission. This toxin is highly toxic to insects and mice, and inhibits the binding of alpha-toxin to cockroach neuronal membranes. This chain is Alpha-like toxin Lqh6, found in Leiurus hebraeus (Hebrew deathstalker scorpion).